The chain runs to 308 residues: MSDEDLFLTALLDSLGKEVNTVLNNSPIKVEEKDGDFKAEDIPSPSSDTWVKLPEVVAVVCDLKGSTHLGTGKHDTSTARIYKSGVEGAVRVFHEFGANFIDIQGDGGFGLFWGERAHERALCAGVTIRTFSEEFVERLEKRWPEGLPETGYKVGIHAARTLVKRIGTKREISEQEAVWAGRPVNYAAKCAQSADRHQVIITQAVWDKMKDNDFIAFSCDCGDGPTANLWTDVTVDRLPEEDRDAVVLNSPWCKTCGPAFCEAIMAGEKKRDIPSAVRTGINRMKMQKALEAKRLRDSSRNSALRGVR.

The Mn(2+) site is built by Asp62 and Asp106.

It belongs to the adenylyl cyclase class-4/guanylyl cyclase family. Pyrimidine cyclase subfamily. As to quaternary structure, homodimer. Mn(2+) is required as a cofactor.

The protein resides in the cytoplasm. It catalyses the reaction GTP = 3',5'-cyclic GMP + diphosphate. The enzyme catalyses UTP = 3',5'-cyclic UMP + diphosphate. Its function is as follows. Pycsar (pyrimidine cyclase system for antiphage resistance) provides immunity against bacteriophage. The pyrimidine cyclase (PycC) synthesizes cyclic nucleotides in response to infection; these serve as specific second messenger signals. The signals activate the adjacent effector, leading to bacterial cell death and abortive phage infection. A clade D Pycsar system. The pyrimidine cyclase gene of a two-gene Pycsar system, generates cyclic UMP (cUMP) from UTP as well as cGMP from GTP to a lesser extent, has little to no activity on ATP or CTP. Expression of this and adjacent effector PtPycTM (AC A0A4Q9KQH5) probably confers resistance to bacteriophage. The genes are probably only expressed in response to bacteriophage infection. The chain is Uridylate cyclase from Propioniciclava tarda.